The chain runs to 212 residues: Ribosomal RNA small subunit methyltransferase G (212 aa).

S-adenosyl-L-methionine is bound by residues G80, L85, A131 to E132, and R146.

The protein belongs to the methyltransferase superfamily. RNA methyltransferase RsmG family.

It is found in the cytoplasm. The catalysed reaction is guanosine(527) in 16S rRNA + S-adenosyl-L-methionine = N(7)-methylguanosine(527) in 16S rRNA + S-adenosyl-L-homocysteine. Functionally, specifically methylates the N7 position of guanine in position 527 of 16S rRNA. This chain is Ribosomal RNA small subunit methyltransferase G, found in Stenotrophomonas maltophilia (strain K279a).